A 370-amino-acid polypeptide reads, in one-letter code: Mesoderm posterior protein 2 (370 aa).

Disordered stretches follow at residues 51–89, 231–265, and 325–350; these read PSQP…EREK, SLER…HWTQ, and TSED…GLQL. Residues 57-77 are compositionally biased toward low complexity; it reads PARSTRTTQATAPRRTRPAPA. The 55-residue stretch at 79–133 folds into the bHLH domain; that stretch reads GQRQSASEREKLRMRTLARALQELRRFLPPSVAPAGQSLTKIETLRLAIRYIGHL. The span at 325 to 334 shows a compositional bias: polar residues; that stretch reads TSEDQGSSPA. The segment at 326-330 is may contain a degradation domain; the sequence is SEDQG.

Post-translationally, degraded by the proteasome. In terms of processing, phosphorylated.

It is found in the nucleus. Functionally, transcription factor with important role in somitogenesis. Defines the rostrocaudal patterning of the somite by participating in distinct Notch pathways. Also regulates the FGF signaling pathway. Specifies the rostral half of the somites. Generates rostro-caudal polarity of somites by down-regulating in the presumptive rostral domain DLL1, a Notch ligand. Participates in the segment border formation by activating in the anterior presomitic mesoderm LFNG, a negative regulator of DLL1-Notch signaling. Acts as a strong suppressor of Notch activity. Together with MESP1 is involved in the epithelialization of somitic mesoderm and in the development of cardiac mesoderm. May play a role with Tcf15 in the differentiation of myotomal and sclerotomal cells by regulating Pax family genes. Also controls the expression of the protocadherin PCDH8/PAPC, EPHA4, RIPPLY2, NOTCH2, FGFR1, and CER1. Binds to the E-boxes within the EPH4A and RIPPLY2 enhancers. In Mus musculus (Mouse), this protein is Mesoderm posterior protein 2 (Mesp2).